We begin with the raw amino-acid sequence, 469 residues long: Probable ribonuclease FAU-1 (469 aa).

Belongs to the FAU-1 family.

In terms of biological role, probable RNase involved in rRNA stability through maturation and/or degradation of precursor rRNAs. Binds to RNA in loop regions with AU-rich sequences. This is Probable ribonuclease FAU-1 from Ignicoccus hospitalis (strain KIN4/I / DSM 18386 / JCM 14125).